A 562-amino-acid chain; its full sequence is Pentatricopeptide repeat-containing protein At3g22670, mitochondrial (562 aa).

Residues 1 to 31 (MLTKLRISKLVSYTLPRRIFQRRFLVTNNTA) constitute a mitochondrion transit peptide. 10 PPR repeats span residues 165–199 (SGHT…EESK), 202–232 (TLDT…MEKS), 238–268 (DTIA…LFDT), 272–306 (DART…EFTP), 307–341 (DVVT…GCNP), 342–376 (NVVT…GCVP), 377–411 (DAKF…GVRR), 412–446 (DVLV…EGES), 450–484 (NVET…DVSI), and 485–519 (DVST…GMVP).

This sequence belongs to the PPR family. P subfamily.

Its subcellular location is the mitochondrion. The polypeptide is Pentatricopeptide repeat-containing protein At3g22670, mitochondrial (Arabidopsis thaliana (Mouse-ear cress)).